Reading from the N-terminus, the 236-residue chain is Probable transcriptional regulatory protein UU295 (236 aa).

Belongs to the TACO1 family.

It is found in the cytoplasm. The sequence is that of Probable transcriptional regulatory protein UU295 from Ureaplasma parvum serovar 3 (strain ATCC 700970).